A 513-amino-acid chain; its full sequence is ATP synthase subunit alpha (513 aa).

169-176 (GDRQTGKT) is an ATP binding site.

The protein belongs to the ATPase alpha/beta chains family. F-type ATPases have 2 components, CF(1) - the catalytic core - and CF(0) - the membrane proton channel. CF(1) has five subunits: alpha(3), beta(3), gamma(1), delta(1), epsilon(1). CF(0) has three main subunits: a(1), b(2) and c(9-12). The alpha and beta chains form an alternating ring which encloses part of the gamma chain. CF(1) is attached to CF(0) by a central stalk formed by the gamma and epsilon chains, while a peripheral stalk is formed by the delta and b chains.

The protein localises to the cell inner membrane. The enzyme catalyses ATP + H2O + 4 H(+)(in) = ADP + phosphate + 5 H(+)(out). Its function is as follows. Produces ATP from ADP in the presence of a proton gradient across the membrane. The alpha chain is a regulatory subunit. The chain is ATP synthase subunit alpha from Shewanella putrefaciens (strain CN-32 / ATCC BAA-453).